A 249-amino-acid chain; its full sequence is 3-deoxy-D-manno-octulosonic acid kinase (249 aa).

D175 is a catalytic residue.

Belongs to the protein kinase superfamily. KdkA/RfaP family.

Its subcellular location is the cell inner membrane. The catalysed reaction is an alpha-Kdo-(2-&gt;6)-lipid IVA + ATP = a 4-O-phospho-alpha-Kdo-(2-&gt;6)-lipid IVA + ADP + H(+). It participates in bacterial outer membrane biogenesis; LPS core biosynthesis. Functionally, catalyzes the ATP-dependent phosphorylation of the 3-deoxy-D-manno-octulosonic acid (Kdo) residue in Kdo-lipid IV(A) at the 4-OH position. The protein is 3-deoxy-D-manno-octulosonic acid kinase of Stenotrophomonas maltophilia (strain K279a).